Consider the following 326-residue polypeptide: Beta-ketoacyl-[acyl-carrier-protein] synthase III (326 aa).

Residues Cys-120 and His-253 contribute to the active site. The ACP-binding stretch occupies residues 254–258 (QANIR). Asn-283 is an active-site residue.

It belongs to the thiolase-like superfamily. FabH family. As to quaternary structure, homodimer.

The protein resides in the cytoplasm. It catalyses the reaction malonyl-[ACP] + acetyl-CoA + H(+) = 3-oxobutanoyl-[ACP] + CO2 + CoA. The protein operates within lipid metabolism; fatty acid biosynthesis. In terms of biological role, catalyzes the condensation reaction of fatty acid synthesis by the addition to an acyl acceptor of two carbons from malonyl-ACP. Catalyzes the first condensation reaction which initiates fatty acid synthesis and may therefore play a role in governing the total rate of fatty acid production. Possesses both acetoacetyl-ACP synthase and acetyl transacylase activities. Its substrate specificity determines the biosynthesis of branched-chain and/or straight-chain of fatty acids. In Cupriavidus necator (strain ATCC 17699 / DSM 428 / KCTC 22496 / NCIMB 10442 / H16 / Stanier 337) (Ralstonia eutropha), this protein is Beta-ketoacyl-[acyl-carrier-protein] synthase III.